The chain runs to 1218 residues: ABC transporter NFT1 (1218 aa).

The Extracellular segment spans residues 1-29 (MIKNGTCPYWERDDLSECARREYIEFKFP). Residue Asn-4 is glycosylated (N-linked (GlcNAc...) asparagine). A helical transmembrane segment spans residues 30-50 (LFILLTGMIYAFCKVFRAFYL). Residues 51 to 103 (RGKNHTNEAPEFEEQGNGNHEYARFSVLRLKSAWESRSFCNVNNRSTFDKFKK) are Cytoplasmic-facing. Residues 104–124 (FIEGAFIVLQLTIHLYILSSM) traverse the membrane as a helical segment. The Extracellular portion of the chain corresponds to 125-130 (PMDNKK). The chain crosses the membrane as a helical span at residues 131–151 (FFHQGFLVQMFLWILLLVVIT). Residues 152-169 (LRLISASQSFRWVLACKR) are Cytoplasmic-facing. The helical transmembrane segment at 170–190 (DLWAVSFYSYASLFTLSILPL) threads the bilayer. The Extracellular segment spans residues 191–201 (RSVFIGKIKDK). A helical transmembrane segment spans residues 202–222 (IMVKYIISETFIDLALLLLLS). Residues 223–302 (TSSIEGTRYS…SSKKGRLLPN (80 aa)) lie on the Cytoplasmic side of the membrane. A helical membrane pass occupies residues 303-323 (IICYFKAVFISQLFLAFVSSF). One can recognise an ABC transmembrane type-1 1 domain in the interval 311–621 (FISQLFLAFV…IASTVSLLIQ (311 aa)). At 324–351 (LNFVPSLLMPRILSYVNDPKSKSWNLVS) the chain is on the extracellular side. Residues 352-374 (LYVSSMLVSKIIATTCRGQGLFL) form a helical membrane-spanning segment. Residues 375–449 (GEKGTMQLRT…VMSIDAFKVS (75 aa)) are Cytoplasmic-facing. The interval 410–434 (NASTSFEENPDSSEAEPRKKSSRKD) is disordered. A compositionally biased stretch (basic and acidic residues) spans 424–434 (AEPRKKSSRKD). The helical transmembrane segment at 450–470 (EAMNTFYLACEAVFMTVTALM) threads the bilayer. Topologically, residues 471-481 (ILYSLLGWSAF) are extracellular. The chain crosses the membrane as a helical span at residues 482–504 (AGTFALLAMIPLNFWCATFYGNY). Over 505 to 558 (QADQLILTDKRTSGISEALNSIRVIKLLAWENLFYQKIINVRDGEIRLLKKKAT) the chain is Cytoplasmic. Residues 559–579 (IFFLNHLIWFFGPTLVSAITF) traverse the membrane as a helical segment. At 580 to 584 (SVFIK) the chain is on the extracellular side. A helical membrane pass occupies residues 585–605 (FQNQTLTPTIAFTALSLFAIL). Topologically, residues 606–953 (RTPMDQIAST…KFSAYKWLAD (348 aa)) are cytoplasmic. The ABC transporter domain occupies 651–892 (FGFEDASMEW…NEFLRESINN (242 aa)). 686–693 (GPTGSGKS) contributes to the ATP binding site. A compositionally biased stretch (polar residues) spans 892–901 (NDSKNTTHNQ). The interval 892 to 926 (NDSKNTTHNQIDLKRSTTSKKTKNGDPEGGNSQDE) is disordered. A helical membrane pass occupies residues 954 to 974 (YFGGLGVVFVFTSSSILIHGI). In terms of domain architecture, ABC transmembrane type-1 2 spans 961–1218 (VFVFTSSSIL…SSVMIIMKAS (258 aa)). Topologically, residues 975-1013 (TLSQGFWLRYWLDTGSSGSKSTWLYRIVEGHSNIYFLLT) are extracellular. Residues 1014-1034 (YIIIGLVSSFLTSGKVWIAII) form a helical membrane-spanning segment. The Cytoplasmic portion of the chain corresponds to 1035–1082 (SGTNVTKKIFAKLLSSILYAKLRFHNVTPTGRIMNRFSKDMDIIDQQL). Residues 1083 to 1105 (IPNFEGLSYSVVVCLWIILLIGY) traverse the membrane as a helical segment. Over 1106-1109 (VTPQ) the chain is Extracellular. A helical membrane pass occupies residues 1110-1132 (FLLFAIPLCALYYTVCTLYLRAS). Over 1133 to 1197 (RELKRIDNIN…NMATEWITYR (65 aa)) the chain is Cytoplasmic. The chain crosses the membrane as a helical span at residues 1198-1218 (VDIIGTLVLFSSSVMIIMKAS).

Belongs to the ABC transporter superfamily. ABCC family. Conjugate transporter (TC 3.A.1.208) subfamily.

It localises to the membrane. This Saccharomyces cerevisiae (strain ATCC 204508 / S288c) (Baker's yeast) protein is ABC transporter NFT1 (NFT1).